Reading from the N-terminus, the 466-residue chain is uncharacterized protein (466 aa).

The C2 NT-type domain maps to 4–199 (NHNSKAKRPK…IINVSLQLKL (196 aa)). Disordered regions lie at residues 262-298 (AKPG…STTI), 374-393 (LGNK…YSTM), and 400-452 (EKKQ…LTDR). Residues 266 to 298 (TNATGNSTSIKSPTSTNHKSSEMTTKPGLSTTI) are compositionally biased toward polar residues. S433 and S439 each carry phosphoserine.

The protein to S.pombe SpCC1494.08c.

This is an uncharacterized protein from Saccharomyces cerevisiae (strain ATCC 204508 / S288c) (Baker's yeast).